A 283-amino-acid polypeptide reads, in one-letter code: Peroxisome biogenesis protein 22 (283 aa).

Residue alanine 2 is modified to N-acetylalanine. The helical transmembrane segment at 45 to 62 (IGAIAGLAIAVIFTWRAI) threads the bilayer. The segment at 66–107 (GEQRQRRQPKRRIHNAETSSAAAAASQSNLASSVAPEVSSPR) is disordered. Positions 81–100 (AETSSAAAAASQSNLASSVA) are enriched in low complexity.

Belongs to the peroxin-22 family. In terms of assembly, interacts with PEX4.

The protein resides in the peroxisome membrane. Its function is as follows. May be tethered PEX4 to the peroxisome membrane and may be involved in a late step of the matrix protein import. Does not play a role in the biogenesis of the peroxisomal membrane. This chain is Peroxisome biogenesis protein 22 (PEX22), found in Arabidopsis thaliana (Mouse-ear cress).